The following is a 130-amino-acid chain: Follitropin subunit beta (130 aa).

The first 20 residues, 1–20 (MMKLIQLCILFWCWRAICCH), serve as a signal peptide directing secretion. 6 disulfide bridges follow: C22-C70, C36-C85, C39-C123, C47-C101, C51-C103, and C106-C113. Residues N26 and N43 are each glycosylated (N-linked (GlcNAc...) asparagine).

Belongs to the glycoprotein hormones subunit beta family. In terms of assembly, heterodimer. The active follitropin is a heterodimer composed of an alpha chain/CGA shared with other hormones and a unique beta chain/FSHB shown here.

It localises to the secreted. Functionally, together with the alpha chain CGA constitutes follitropin, the follicle-stimulating hormone, and provides its biological specificity to the hormone heterodimer. Binds FSHR, a G protein-coupled receptor, on target cells to activate downstream signaling pathways. Follitropin is involved in follicle development and spermatogenesis in reproductive organs. This is Follitropin subunit beta (Fshb) from Mus musculus (Mouse).